Reading from the N-terminus, the 316-residue chain is GTP cyclohydrolase FolE2 1 (316 aa).

It belongs to the GTP cyclohydrolase IV family.

It catalyses the reaction GTP + H2O = 7,8-dihydroneopterin 3'-triphosphate + formate + H(+). It participates in cofactor biosynthesis; 7,8-dihydroneopterin triphosphate biosynthesis; 7,8-dihydroneopterin triphosphate from GTP: step 1/1. In terms of biological role, converts GTP to 7,8-dihydroneopterin triphosphate. This Burkholderia lata (strain ATCC 17760 / DSM 23089 / LMG 22485 / NCIMB 9086 / R18194 / 383) protein is GTP cyclohydrolase FolE2 1.